The sequence spans 434 residues: D-amino acid dehydrogenase (434 aa).

3-17 (VLVLGSGVIGTTSAW) provides a ligand contact to FAD.

The protein belongs to the DadA oxidoreductase family. It depends on FAD as a cofactor.

It carries out the reaction a D-alpha-amino acid + A + H2O = a 2-oxocarboxylate + AH2 + NH4(+). It participates in amino-acid degradation; D-alanine degradation; NH(3) and pyruvate from D-alanine: step 1/1. Its function is as follows. Oxidative deamination of D-amino acids. This Stenotrophomonas maltophilia (strain R551-3) protein is D-amino acid dehydrogenase.